Reading from the N-terminus, the 273-residue chain is Large ribosomal subunit protein uL2cz/uL2cy (273 aa).

A disordered region spans residues 224–273 (NPVDHPHGGGEGRAPIGRKKPATPWGYPALGRRSRKRNKYSDRFILRRRK). A compositionally biased stretch (basic and acidic residues) spans 262–273 (KYSDRFILRRRK).

The protein belongs to the universal ribosomal protein uL2 family. Part of the 50S ribosomal subunit.

It localises to the plastid. The protein localises to the chloroplast. The chain is Large ribosomal subunit protein uL2cz/uL2cy (rpl2-A) from Piper cenocladum (Ant piper).